Reading from the N-terminus, the 205-residue chain is Large ribosomal subunit protein uL3c (205 aa).

The interval 130–150 is disordered; it reads RGPMSHGSKNHRQPGSIGAGT.

The protein belongs to the universal ribosomal protein uL3 family. Part of the 50S ribosomal subunit.

It localises to the plastid. The protein localises to the chloroplast. One of the primary rRNA binding proteins, it binds directly near the 3'-end of the 23S rRNA, where it nucleates assembly of the 50S subunit. This is Large ribosomal subunit protein uL3c (rpl3) from Gracilaria tenuistipitata var. liui (Red alga).